The primary structure comprises 220 residues: Fructose-6-phosphate aldolase (220 aa).

Lysine 85 (schiff-base intermediate with substrate) is an active-site residue.

The protein belongs to the transaldolase family. Type 3A subfamily. As to quaternary structure, homodecamer.

The protein localises to the cytoplasm. The catalysed reaction is beta-D-fructose 6-phosphate = dihydroxyacetone + D-glyceraldehyde 3-phosphate. Its function is as follows. Catalyzes the reversible formation of fructose 6-phosphate from dihydroxyacetone and D-glyceraldehyde 3-phosphate via an aldolization reaction. The protein is Fructose-6-phosphate aldolase of Salmonella choleraesuis (strain SC-B67).